Here is a 420-residue protein sequence, read N- to C-terminus: Tyrosine--tRNA ligase 2 (420 aa).

An L-tyrosine-binding site is contributed by Tyr-36. The 'HIGH' region motif lies at 41–50 (PTADSLHIGH). Positions 171 and 175 each coordinate L-tyrosine. Positions 231–235 (KFGKT) match the 'KMSKS' region motif. Lys-234 contacts ATP. The region spanning 354-420 (LSLVDLLVTS…GKKKYFLLKY (67 aa)) is the S4 RNA-binding domain.

Belongs to the class-I aminoacyl-tRNA synthetase family. TyrS type 1 subfamily. Homodimer.

Its subcellular location is the cytoplasm. The enzyme catalyses tRNA(Tyr) + L-tyrosine + ATP = L-tyrosyl-tRNA(Tyr) + AMP + diphosphate + H(+). Functionally, catalyzes the attachment of tyrosine to tRNA(Tyr) in a two-step reaction: tyrosine is first activated by ATP to form Tyr-AMP and then transferred to the acceptor end of tRNA(Tyr). The chain is Tyrosine--tRNA ligase 2 from Enterococcus faecalis (strain ATCC 700802 / V583).